We begin with the raw amino-acid sequence, 530 residues long: Portal protein B (530 aa).

This sequence belongs to the siphoviridae portal protein family. In terms of assembly, homododecamer. Interacts with the terminase complex composed of two small and one large terminase subunits. Post-translationally, proteolytically cleaved by the viral protease during capsid maturation.

The protein resides in the virion. In terms of biological role, forms the portal vertex of the capsid. This portal plays critical roles in head assembly, genome packaging, neck/tail attachment, and genome ejection. The portal protein multimerizes as a single ring-shaped homododecamer arranged around a central channel. Binds to the terminase subunits to form the packaging machine. The polypeptide is Portal protein B (Enterobacteria phage P21 (Bacteriophage 21)).